The following is a 54-amino-acid chain: Large ribosomal subunit protein bL33 (54 aa).

This sequence belongs to the bacterial ribosomal protein bL33 family.

The chain is Large ribosomal subunit protein bL33 from Legionella pneumophila (strain Lens).